Consider the following 63-residue polypeptide: Protein CYSTEINE-RICH TRANSMEMBRANE MODULE 12 (63 aa).

The disordered stretch occupies residues 1-34 (MQDMRDQNPPQGYPAAEQVSEQPGQDKKKKKPRF). The chain crosses the membrane as a helical span at residues 40–56 (KGDRGFIEGCLFALCCC).

This sequence belongs to the CYSTM1 family. As to quaternary structure, homodimer and heterodimers. Binds weakly to CYSTM4, CYSTM6 and CYSTM7. As to expression, mostly expressed in roots, flowers and siliques and, to a lower extent, in stems and leaves.

It is found in the cell membrane. It localises to the cytoplasm. Involved in resistance to abiotic stress. The protein is Protein CYSTEINE-RICH TRANSMEMBRANE MODULE 12 of Arabidopsis thaliana (Mouse-ear cress).